Here is a 1147-residue protein sequence, read N- to C-terminus: GPI inositol-deacylase (1147 aa).

Positions 1–94 (MRRHSSGSSE…RTSPSSPLGL (94 aa)) are disordered. N-linked (GlcNAc...) asparagine glycosylation occurs at Asn-23. Over residues 28–49 (SAKDSRSSAHPTTKLDHNRNAD) the composition is skewed to basic and acidic residues. Over residues 50–63 (RPPSFSISRRSSSI) the composition is skewed to low complexity. N-linked (GlcNAc...) asparagine glycosylation occurs at Asn-74. Residues 127 to 147 (AITFSALVAAIVGIGFLVAVL) form a helical membrane-spanning segment. The active site involves Ser-310. The next 2 helical transmembrane spans lie at 795–815 (LYMR…ALVL) and 843–863 (IPLM…MAPA). Asn-865 and Asn-873 each carry an N-linked (GlcNAc...) asparagine glycan. Transmembrane regions (helical) follow at residues 893-913 (PLFL…CTVF), 918-938 (LTLT…PGWI), and 965-985 (VLLL…VACL). N-linked (GlcNAc...) asparagine glycosylation is present at Asn-1011. The next 3 membrane-spanning stretches (helical) occupy residues 1015–1035 (SIFI…VVWV), 1052–1072 (VLSV…KMIP), and 1084–1104 (LLLF…AYTL).

This sequence belongs to the GPI inositol-deacylase family.

It localises to the endoplasmic reticulum membrane. Functionally, involved in inositol deacylation of GPI-anchored proteins which plays important roles in the quality control and ER-associated degradation of GPI-anchored proteins. This is GPI inositol-deacylase (BST1) from Chaetomium globosum (strain ATCC 6205 / CBS 148.51 / DSM 1962 / NBRC 6347 / NRRL 1970) (Soil fungus).